We begin with the raw amino-acid sequence, 218 residues long: Translation initiation factor 6 (218 aa).

Belongs to the eIF-6 family.

Functionally, binds to the 50S ribosomal subunit and prevents its association with the 30S ribosomal subunit to form the 70S initiation complex. The sequence is that of Translation initiation factor 6 from Methanosarcina acetivorans (strain ATCC 35395 / DSM 2834 / JCM 12185 / C2A).